The primary structure comprises 409 residues: Killer cell lectin-like receptor subfamily G member 2 (409 aa).

Positions 1–120 (MEESWEAAPG…GAEPAPSAWA (120 aa)) are disordered. Positions 41 to 53 (PEGPESSPSPAGA) are enriched in low complexity. A compositionally biased stretch (pro residues) spans 72 to 81 (SPRPGSPRVP). A compositionally biased stretch (low complexity) spans 104-120 (PRNGEAPGAEPAPSAWA). The residue at position 158 (Ser-158) is a Phosphoserine. Residues 193–216 (TESGCDAEGRASPAEGSAGSPGSP) are disordered. Positions 202 to 216 (RASPAEGSAGSPGSP) are enriched in low complexity. Residues 263-283 (WALAFMAVLLAVSGVVIVVLA) traverse the membrane as a helical segment. Positions 300–405 (SEEHCYYFSA…CSTPRPWVCA (106 aa)) constitute a C-type lectin domain. Intrachain disulfides connect Cys-321–Cys-404 and Cys-383–Cys-396.

It is found in the membrane. In Homo sapiens (Human), this protein is Killer cell lectin-like receptor subfamily G member 2 (KLRG2).